A 204-amino-acid chain; its full sequence is Glutathione S-transferase (204 aa).

Residues 3–80 form the GST N-terminal domain; the sequence is PSYKLTYCPV…YLGKQFGLSG (78 aa). Residues Tyr-9, Trp-40, Lys-44, 50 to 52, and 64 to 65 contribute to the glutathione site; these read GKT and QS. One can recognise a GST C-terminal domain in the interval 82 to 204; it reads DDWENLEIDM…WVAKRPPTDL (123 aa).

Belongs to the GST superfamily. Sigma family.

The catalysed reaction is RX + glutathione = an S-substituted glutathione + a halide anion + H(+). The chain is Glutathione S-transferase from Blattella germanica (German cockroach).